Consider the following 114-residue polypeptide: Large ribosomal subunit protein P2 (114 aa).

A disordered region spans residues 84-114 (TDALQAGSKKGETKEGPKEESDEDMGFGLFD). Residues 92–102 (KKGETKEGPKE) show a composition bias toward basic and acidic residues.

The protein belongs to the eukaryotic ribosomal protein P1/P2 family. As to quaternary structure, P1 and P2 exist as dimers at the large ribosomal subunit. In terms of processing, phosphorylated.

In terms of biological role, plays an important role in the elongation step of protein synthesis. The sequence is that of Large ribosomal subunit protein P2 (rpp-2) from Brugia malayi (Filarial nematode worm).